A 61-amino-acid chain; its full sequence is DNA-directed RNA polymerase subunit 12-like protein (61 aa).

Zn(2+) contacts are provided by cysteine 21, cysteine 24, cysteine 38, and cysteine 41.

It belongs to the archaeal Rpo12/eukaryotic RPC10 RNA polymerase subunit family.

It localises to the nucleus. This chain is DNA-directed RNA polymerase subunit 12-like protein (NRPB12L), found in Arabidopsis thaliana (Mouse-ear cress).